The primary structure comprises 622 residues: Procollagen galactosyltransferase 1 (622 aa).

The N-terminal stretch at 1–29 (MAAAPRAGRRRGQPLLALLLLLLAPLPPG) is a signal peptide. Residues N96, N184, and N381 are each glycosylated (N-linked (GlcNAc...) asparagine). Residues 588-606 (RAKSQKMREQQALSREAKN) are compositionally biased toward basic and acidic residues. Positions 588–622 (RAKSQKMREQQALSREAKNSDVLQSPLDSAARDEL) are disordered. Residues 619–622 (RDEL) carry the Endoplasmic reticulum retention motif motif.

This sequence belongs to the glycosyltransferase 25 family. In terms of processing, N-glycosylated. In terms of tissue distribution, ubiquitous with higher levels in placenta, heart, lung and spleen.

The protein localises to the endoplasmic reticulum lumen. It catalyses the reaction (5R)-5-hydroxy-L-lysyl-[collagen] + UDP-alpha-D-galactose = (5R)-5-O-(beta-D-galactosyl)-5-hydroxy-L-lysyl-[collagen] + UDP + H(+). Functionally, beta-galactosyltransferase that transfers beta-galactose to hydroxylysine residues of type I collagen. By acting on collagen glycosylation, facilitates the formation of collagen triple helix. Also involved in the biosynthesis of collagen type IV. The chain is Procollagen galactosyltransferase 1 (COLGALT1) from Homo sapiens (Human).